We begin with the raw amino-acid sequence, 88 residues long: Small ribosomal subunit protein uS15c (88 aa).

This sequence belongs to the universal ribosomal protein uS15 family. As to quaternary structure, part of the 30S ribosomal subunit.

The protein localises to the plastid. Its subcellular location is the chloroplast. The sequence is that of Small ribosomal subunit protein uS15c (rps15) from Aethionema cordifolium (Lebanon stonecress).